Reading from the N-terminus, the 115-residue chain is NADH-ubiquinone oxidoreductase chain 3 (115 aa).

A run of 3 helical transmembrane segments spans residues 3–23 (LVMA…IAFW), 55–75 (FFLV…LLPL), and 86–106 (TMLI…AYEW).

It belongs to the complex I subunit 3 family. As to quaternary structure, core subunit of respiratory chain NADH dehydrogenase (Complex I) which is composed of 45 different subunits. Interacts with TMEM186. Interacts with TMEM242.

It is found in the mitochondrion inner membrane. It catalyses the reaction a ubiquinone + NADH + 5 H(+)(in) = a ubiquinol + NAD(+) + 4 H(+)(out). Core subunit of the mitochondrial membrane respiratory chain NADH dehydrogenase (Complex I) which catalyzes electron transfer from NADH through the respiratory chain, using ubiquinone as an electron acceptor. Essential for the catalytic activity of complex I. The protein is NADH-ubiquinone oxidoreductase chain 3 of Hippopotamus amphibius (Hippopotamus).